Reading from the N-terminus, the 23-residue chain is Paralytic peptide 2 (23 aa).

Residues Cys7 and Cys19 are joined by a disulfide bond.

Belongs to the GBP/PSP1/paralytic peptide family. In terms of tissue distribution, hemolymph.

In terms of biological role, causes rapid, rigid paralysis when injected into Lepidopteran larvae. The physiological role may be to reduce hemolymph loss following injury and promote wound healing. The protein is Paralytic peptide 2 of Spodoptera exigua (Beet armyworm).